The primary structure comprises 337 residues: Glucose transporter 2C (337 aa).

The interval 1-22 (MTERRDNVSHAPDAIEGPNDGA) is disordered. Over 1 to 43 (MTERRDNVSHAPDAIEGPNDGAHAEDTSPGFFSLENLGVAQVQ) the chain is Cytoplasmic. The helical transmembrane segment at 44–64 (VVGGTLNGFSIGFVAVYILLY) threads the bilayer. The Extracellular portion of the chain corresponds to 65–119 (EVATNCSLFKTTEACKAVGSYGCEWKDTEVCSWKKECDSDSDGVNPCESLIGYSS). N-linked (GlcNAc...) asparagine glycosylation occurs at N69. Residues 120 to 140 (LYSGIFASAMIVGSMVGSIIA) traverse the membrane as a helical segment. The Cytoplasmic portion of the chain corresponds to 141–152 (GKCITMFGLKKS). A helical membrane pass occupies residues 153–173 (FIIVGVMSVVASALNHISVAT). Over 174-175 (NE) the chain is Extracellular. A helical membrane pass occupies residues 176-196 (FWVLCAGRVLMGIGLGVVCVI). Residues 197–214 (CPMYVNENAHPKLSKVDG) lie on the Cytoplasmic side of the membrane. A helical transmembrane segment spans residues 215–235 (VLFQVFITFGIMLAAMLGLIL). Topologically, residues 236–250 (DKTVNYDNDPDMAGR) are extracellular. Residues 251-271 (FHGFCAVSSVLSVAMFLVGMF) traverse the membrane as a helical segment. The Cytoplasmic segment spans residues 272 to 300 (LRESTATFSQDDDGKADGGMDPNEYGWGQ). Residues 301–321 (MLWPLFMGAVTAGTLQLTGIN) traverse the membrane as a helical segment. The Extracellular segment spans residues 322-337 (AVMNYAPKITENLGMD).

This sequence belongs to the major facilitator superfamily. Sugar transporter (TC 2.A.1.1) family.

It localises to the membrane. Functionally, facilitative glucose transporter. The chain is Glucose transporter 2C (THT2C) from Trypanosoma brucei brucei.